The chain runs to 228 residues: Ribosomal RNA large subunit methyltransferase E (228 aa).

Gly-76, Trp-78, Asp-99, Asp-115, and Asp-139 together coordinate S-adenosyl-L-methionine. Lys-179 serves as the catalytic Proton acceptor.

This sequence belongs to the class I-like SAM-binding methyltransferase superfamily. RNA methyltransferase RlmE family.

The protein localises to the cytoplasm. The catalysed reaction is uridine(2552) in 23S rRNA + S-adenosyl-L-methionine = 2'-O-methyluridine(2552) in 23S rRNA + S-adenosyl-L-homocysteine + H(+). Its function is as follows. Specifically methylates the uridine in position 2552 of 23S rRNA at the 2'-O position of the ribose in the fully assembled 50S ribosomal subunit. The protein is Ribosomal RNA large subunit methyltransferase E of Nitrobacter hamburgensis (strain DSM 10229 / NCIMB 13809 / X14).